We begin with the raw amino-acid sequence, 336 residues long: Fructose-1,6-bisphosphatase class 1 (336 aa).

Residues glutamate 90, aspartate 112, leucine 114, and aspartate 115 each coordinate Mg(2+). Residues 115-118 (DGSS), asparagine 207, and lysine 273 each bind substrate. Glutamate 279 contacts Mg(2+).

Belongs to the FBPase class 1 family. In terms of assembly, homotetramer. The cofactor is Mg(2+).

The protein resides in the cytoplasm. The catalysed reaction is beta-D-fructose 1,6-bisphosphate + H2O = beta-D-fructose 6-phosphate + phosphate. The protein operates within carbohydrate biosynthesis; gluconeogenesis. This is Fructose-1,6-bisphosphatase class 1 from Xanthomonas oryzae pv. oryzae (strain PXO99A).